The primary structure comprises 244 residues: tRNA (guanine-N(7)-)-methyltransferase (244 aa).

Residues 1–10 (MSDTPQSPAQ) are compositionally biased toward polar residues. A disordered region spans residues 1 to 20 (MSDTPQSPAQGSLAEHDEAR). The S-adenosyl-L-methionine site is built by glutamate 74, glutamate 99, aspartate 126, and aspartate 149. Aspartate 149 is an active-site residue. Residues lysine 153, aspartate 185, and 222–225 (TKFE) each bind substrate.

The protein belongs to the class I-like SAM-binding methyltransferase superfamily. TrmB family.

It carries out the reaction guanosine(46) in tRNA + S-adenosyl-L-methionine = N(7)-methylguanosine(46) in tRNA + S-adenosyl-L-homocysteine. Its pathway is tRNA modification; N(7)-methylguanine-tRNA biosynthesis. Functionally, catalyzes the formation of N(7)-methylguanine at position 46 (m7G46) in tRNA. The polypeptide is tRNA (guanine-N(7)-)-methyltransferase (Pseudomonas aeruginosa (strain UCBPP-PA14)).